Consider the following 308-residue polypeptide: Tyrosine recombinase XerD (308 aa).

The region spanning 3 to 89 is the Core-binding (CB) domain; the sequence is NGFTRLTEQF…SIHEFHRFAL (87 aa). One can recognise a Tyr recombinase domain in the interval 110 to 301; that stretch reads TLPDVLTVDE…SPETLIETYL (192 aa). Catalysis depends on residues Arg153, Lys177, His253, Arg256, and His279. The O-(3'-phospho-DNA)-tyrosine intermediate role is filled by Tyr288.

It belongs to the 'phage' integrase family. XerD subfamily. In terms of assembly, forms a cyclic heterotetrameric complex composed of two molecules of XerC and two molecules of XerD.

It is found in the cytoplasm. Its function is as follows. Site-specific tyrosine recombinase, which acts by catalyzing the cutting and rejoining of the recombining DNA molecules. The XerC-XerD complex is essential to convert dimers of the bacterial chromosome into monomers to permit their segregation at cell division. It also contributes to the segregational stability of plasmids. This chain is Tyrosine recombinase XerD, found in Bifidobacterium longum (strain NCC 2705).